Reading from the N-terminus, the 646-residue chain is ATP-dependent rRNA helicase SPB4 (646 aa).

The short motif at 15-43 is the Q motif element; the sequence is WGALTPSLAPWILDYLSSMGFEQPTPVQK. Positions 46-247 constitute a Helicase ATP-binding domain; that stretch reads FDIFRGNKDV…TVGLLYPHKI (202 aa). 59–66 lines the ATP pocket; it reads AVTGSGKT. Positions 195–198 match the DEAD box motif; sequence DEAD. The Helicase C-terminal domain occupies 284 to 434; that stretch reads ALCQLLERLE…PLAKPPVSVT (151 aa). Basic and acidic residues-rich tracts occupy residues 539-548 and 566-581; these read KKEKAAREAQ and NEAW…VKAA. Positions 539–646 are disordered; the sequence is KKEKAAREAQ…GGDEFEGFDD (108 aa). Positions 572-623 form a coiled coil; it reads KHEHEDVKAARREKKRRKREAQRLGDMTEPEREEQRKLDEMIAEVRRRNAEA. The span at 582–591 shows a compositional bias: basic residues; sequence RREKKRRKRE. The segment covering 600-621 has biased composition (basic and acidic residues); sequence EPEREEQRKLDEMIAEVRRRNA. Residues 622-631 are compositionally biased toward low complexity; it reads EAPTPAAQAA.

It belongs to the DEAD box helicase family. DDX55/SPB4 subfamily. Component of pre-60S ribosomal complexes.

It localises to the nucleus. The protein localises to the nucleolus. It catalyses the reaction ATP + H2O = ADP + phosphate + H(+). Functionally, ATP-binding RNA helicase involved in the biogenesis of 60S ribosomal subunits. Binds 90S pre-ribosomal particles and dissociates from pre-60S ribosomal particles after processing of 27SB pre-rRNA. Required for the normal formation of 18S rRNA through the processing of pre-rRNAs at sites A0, A1 and A2, and the normal formation of 25S and 5.8S rRNAs through the processing of pre-rRNAs at sites C1 and C2. The polypeptide is ATP-dependent rRNA helicase SPB4 (Chaetomium globosum (strain ATCC 6205 / CBS 148.51 / DSM 1962 / NBRC 6347 / NRRL 1970) (Soil fungus)).